The primary structure comprises 349 residues: Variable large protein 19 (349 aa).

Residues 1–18 (MRKRISAIIMTLFMVLVS) form the signal peptide. The N-palmitoyl cysteine moiety is linked to residue cysteine 19. Residue cysteine 19 is the site of S-diacylglycerol cysteine attachment.

The protein belongs to the variable large protein (Vlp) family. Gamma subfamily.

The protein resides in the cell outer membrane. In terms of biological role, the Vlp and Vsp proteins are antigenically distinct proteins, only one vlp or vsp gene is transcriptionally active at any one time. Switching between these genes is a mechanism of host immune response evasion. The polypeptide is Variable large protein 19 (Borrelia hermsii).